A 361-amino-acid chain; its full sequence is Peptide chain release factor 1 (361 aa).

Residue Gln-236 is modified to N5-methylglutamine. Residues Thr-285–Arg-309 are compositionally biased toward basic and acidic residues. Residues Thr-285–Tyr-311 form a disordered region.

This sequence belongs to the prokaryotic/mitochondrial release factor family. Post-translationally, methylated by PrmC. Methylation increases the termination efficiency of RF1.

It localises to the cytoplasm. Functionally, peptide chain release factor 1 directs the termination of translation in response to the peptide chain termination codons UAG and UAA. This chain is Peptide chain release factor 1, found in Methylorubrum extorquens (strain CM4 / NCIMB 13688) (Methylobacterium extorquens).